A 268-amino-acid polypeptide reads, in one-letter code: Zinc import ATP-binding protein ZnuC (268 aa).

The ABC transporter domain occupies 16–231 (IQLKNINVVF…PTFMRLWGNQ (216 aa)). Residue 48–55 (GPNGGGKS) coordinates ATP.

The protein belongs to the ABC transporter superfamily. Zinc importer (TC 3.A.1.15.5) family. The complex is composed of two ATP-binding proteins (ZnuC), two transmembrane proteins (ZnuB) and a solute-binding protein (ZnuA).

The protein localises to the cell inner membrane. The catalysed reaction is Zn(2+)(out) + ATP(in) + H2O(in) = Zn(2+)(in) + ADP(in) + phosphate(in) + H(+)(in). In terms of biological role, part of the ABC transporter complex ZnuABC involved in zinc import. Responsible for energy coupling to the transport system. This chain is Zinc import ATP-binding protein ZnuC, found in Haemophilus influenzae (strain ATCC 51907 / DSM 11121 / KW20 / Rd).